The following is a 589-amino-acid chain: Kelch-like protein 25 (589 aa).

Residues 46-114 (TDMTLWAGNR…AYSSKIIINE (69 aa)) form the BTB domain. Positions 149–250 (CLGMMILSDA…LPSELLKEAV (102 aa)) constitute a BACK domain. 6 Kelch repeats span residues 296–340 (TLLI…AIGC), 341–388 (KVYI…ELDN), 389–444 (CLYV…SAKL), 446–492 (LFVF…VLGS), 494–538 (IFIM…ASGN), and 539–585 (KVYV…STWK).

Component of the BCR(KLHL25) E3 ubiquitin ligase complex, at least composed of cul3, klhl25 and rbx1.

The protein operates within protein modification; protein ubiquitination. Functionally, substrate-specific adapter of a BCR (BTB-CUL3-RBX1) E3 ubiquitin ligase complex involved in various processes, such as translation homeostasis and lipid synthesis. The BCR(KLHL25) ubiquitin ligase complex acts by mediating ubiquitination of hypophosphorylated eif4ebp1 (4E-BP1): ubiquitination and subsequent degradation of hypophosphorylated EIF4EBP1 (4E-BP1) probably serves as a homeostatic mechanism to maintain translation and prevent eIF4E inhibition when eIF4E levels are low. The BCR(KLHL25) complex also acts as a regulator of lipid synthesis by mediating ubiquitination and degradation of ACLY, thereby inhibiting lipid synthesis. The protein is Kelch-like protein 25 of Xenopus laevis (African clawed frog).